We begin with the raw amino-acid sequence, 703 residues long: Polyribonucleotide nucleotidyltransferase (703 aa).

2 residues coordinate Mg(2+): aspartate 484 and aspartate 490. Positions 551-610 constitute a KH domain; that stretch reads PTVTTLRVLPEKISVIIGPAGKNIKKIIEETGVKIDLDPTGLVKIYATSKIAAEKAIDMI. The 69-residue stretch at 620–688 folds into the S1 motif domain; it reads GEVYLGKVTR…DQGRIKVSLK (69 aa).

Belongs to the polyribonucleotide nucleotidyltransferase family. The cofactor is Mg(2+).

It is found in the cytoplasm. It catalyses the reaction RNA(n+1) + phosphate = RNA(n) + a ribonucleoside 5'-diphosphate. Its function is as follows. Involved in mRNA degradation. Catalyzes the phosphorolysis of single-stranded polyribonucleotides processively in the 3'- to 5'-direction. This is Polyribonucleotide nucleotidyltransferase from Sulfurihydrogenibium sp. (strain YO3AOP1).